We begin with the raw amino-acid sequence, 252 residues long: Phosphate import ATP-binding protein PstB (252 aa).

One can recognise an ABC transporter domain in the interval 5-247 (MRGQDVKVFY…PKEQRTQDYI (243 aa)). 37 to 44 (GPSGCGKS) contacts ATP.

Belongs to the ABC transporter superfamily. Phosphate importer (TC 3.A.1.7) family. In terms of assembly, the complex is composed of two ATP-binding proteins (PstB), two transmembrane proteins (PstC and PstA) and a solute-binding protein (PstS).

The protein localises to the cell inner membrane. The enzyme catalyses phosphate(out) + ATP + H2O = ADP + 2 phosphate(in) + H(+). In terms of biological role, part of the ABC transporter complex PstSACB involved in phosphate import. Responsible for energy coupling to the transport system. This is Phosphate import ATP-binding protein PstB from Bartonella henselae (strain ATCC 49882 / DSM 28221 / CCUG 30454 / Houston 1) (Rochalimaea henselae).